Reading from the N-terminus, the 201-residue chain is Lymphocyte antigen 6 complex locus protein G5b (201 aa).

Residues 1–18 form the signal peptide; that stretch reads MKVHMLVGVLVMVGFTVG. A UPAR/Ly6 domain is found at 26–118; that stretch reads RTCHFCLVED…SPQLQSSLPE (93 aa). Disulfide bonds link Cys-28–Cys-55, Cys-31–Cys-40, Cys-47–Cys-73, Cys-81–Cys-98, and Cys-99–Cys-104. Residues Asn-141 and Asn-183 are each glycosylated (N-linked (GlcNAc...) asparagine).

As to quaternary structure, forms oligomer. N-glycosylated.

It localises to the secreted. The protein is Lymphocyte antigen 6 complex locus protein G5b (LY6G5B) of Homo sapiens (Human).